The following is a 339-amino-acid chain: Lipoate-protein ligase A (339 aa).

One can recognise a BPL/LPL catalytic domain in the interval 28-211 (NPDSHTLFLW…AFREYYRDTD (184 aa)). Residues arginine 70, 75-78 (GAVF), and lysine 129 each bind ATP. Lysine 129 provides a ligand contact to (R)-lipoate.

This sequence belongs to the LplA family. As to quaternary structure, monomer.

Its subcellular location is the cytoplasm. It catalyses the reaction L-lysyl-[lipoyl-carrier protein] + (R)-lipoate + ATP = N(6)-[(R)-lipoyl]-L-lysyl-[lipoyl-carrier protein] + AMP + diphosphate + H(+). The protein operates within protein modification; protein lipoylation via exogenous pathway; protein N(6)-(lipoyl)lysine from lipoate: step 1/2. It participates in protein modification; protein lipoylation via exogenous pathway; protein N(6)-(lipoyl)lysine from lipoate: step 2/2. In terms of biological role, catalyzes both the ATP-dependent activation of exogenously supplied lipoate to lipoyl-AMP and the transfer of the activated lipoyl onto the lipoyl domains of lipoate-dependent enzymes. The polypeptide is Lipoate-protein ligase A (Psychrobacter cryohalolentis (strain ATCC BAA-1226 / DSM 17306 / VKM B-2378 / K5)).